Reading from the N-terminus, the 1741-residue chain is MEGNRTENLCNRSFGWLQRQENDVKPWLWKLSNCFSAAEKTLPCSAKTKDYMENQKGVVESKDASSHNAGSKLFPAVPLPDVHPLQQQQIQLSPGPKVSCCAHGSDSCTPQMHCGVGDGSVIHPGTILDSKSTGTITCQVGSGFAFPSASSLKNPPPRSNLAGIASEFPGMCIENSVSSYQHLPCCGKLHFQSCHGNVHKLHQFPALQSCTPSGYFPCSEFTSGATGRLDEHIAQSELTSHVCASPLHLSVAPSVCLKGSHYCSDCLNKPTRNSLVDAAKIWPNIPPPNTQTGPVSIPICNGCGTQGTGNEKSLLLASSLGKSPQKYGSPEVAVAGQVLENLPPIGVFWDIENCSVPTGRSAVAVVQRIREKFFKGHREAEFICVCDISKENKEVIQELNNCQVTVAHINATAKNAADDKLRQSLRRFADTHTAPATVVLVSTDVNFALELSDLRHRHGFRIILVHKNQASEALLHHAHELVCFEEFISDLPPRLPLKMPACHTLLYVYNLPTNRDSKSVSNRLRRLSDNCGGKVLSISGSSAILRFLNQESAERAWKRMENEDVFGNRIVVSFAPKNKELNETKSSNFVGTEKVKSPKKVNRSTKLCITNKDGSDQSSGTKGSAGRGLQSHGSVIKPTNVKSLQELCRLESKTISRNTENHQEHLREIPSQNNSHAAAPVSLTTKKSGVGESSCKSSYKKETSVSRSMTNSPVDKKDKDEAVFQVSYPSAFSKLTASRQLSPLFVSQNCWSSRSMSPNLSNRSSPLTFNVVNHTSGTDCPDPFANGADIQISNIDYRLSRKELQQTLQETFSRHGKVKCVELSPHTDYQLKATVQMENLQEAISAVNSLHRYKIGSKRIQVSLATGAANKSLSLLSSETVSILQDAPACCLPMFKFTEIYEKKFGRKLMVSDLYKLTDTVAIRDQGGGRLVCLLPSSQARQSPLGSSQSHDGSSANCSPIIFEELEYHEPVCKQHCLNKDVIEHEFDPDSYRIPFAILSLKTFAPQVHSLLQTHEGTVPLLSFPDCYMSEFNDLEMVPEGQGGVPLEHLITCVPGVNIATAQNGIKVIKWIHNKPPPPTTVDPWLLRSKSPVGNPQLIQFSREVIDLLKSQPSCIIPVSKFIPTYHHHFAKQCRVSDYGYSKLMELLEAVPHVLQILGMGSKRLLTLTHRAQVKRFTQDLLKLLKSQASKQVIVKEFLQAYHWCFSKDWDVTEYGVCELADIISEIPDTTICLSQQDNEMVICIPKRERTQEEIERTKQFSKEVVDLLRHQPHFRMPFSKFIPSYHHHFGRQCKLAYYGFTKLLELFEAIPEVLQVLECGEEKILTLTEVEQVKAVAAQFVKLLRSQKDNCLMMSDLLSEYSKTFGYTLRLHDYDVSSVPALMQKLCHVVKVVDTESGKQIQLINRKSLRTLTAQLLVLLMSWDGASFLSVEQLKQHYETIHSTSLNPCEYGFMTLTELLKSLPYLVEVFTNGAEEEYVRLTNLYMFAKNVRSLLHTYHYQQIFLHEFLVAYSKYTGEVLQPKAYGCNNLEELLGAIPQVVWIKGHGHKRIVVLKNDMKTRFSSPSFPLADHVDDHGNQLDDHNGHIMETPGSTSSMELSLGTPSNAPNQTEQELLCLTNTSPVDLLCEPVPSCLPSPQLRPDPVVLESADLIQFEERPVPLSEMMILTEEEKQKIVTTAQEKLTSGSVASSTAENTSVPPRHSSETQLNKEAMDSPAKKQHKNKVKLAANFSLAPVTKL.

Residues isoleucine 345–valine 482 enclose the NYN domain. Disordered regions lie at residues lysine 594 to isoleucine 636, threonine 659 to alanine 678, and leucine 683 to lysine 716. Residues threonine 659–glutamate 668 show a composition bias toward basic and acidic residues. An RRM domain is found at alanine 788–glycine 867. HTH OST-type domains lie at serine 872 to glycine 946, serine 1000 to proline 1076, glutamine 1097 to arginine 1171, glutamine 1173 to arginine 1248, arginine 1257 to glutamate 1332, glutamine 1333 to lysine 1408, serine 1409 to threonine 1483, and asparagine 1484 to aspartate 1558. Residues lysine 1684–valine 1700 show a composition bias toward polar residues. The tract at residues lysine 1684–valine 1727 is disordered.

The protein localises to the peroxisome. Its function is as follows. Essential regulator of oogenesis required for female meiotic progression to repress transposable elements and preventing their mobilization, which is essential for the germline integrity. The polypeptide is Meiosis regulator and mRNA stability factor 1 (Gallus gallus (Chicken)).